Here is a 278-residue protein sequence, read N- to C-terminus: HTH-type transcriptional activator RhaS (278 aa).

Residues 174-272 (NLLLAWLEDH…NWSPRDIRQG (99 aa)) enclose the HTH araC/xylS-type domain. 2 DNA-binding regions (H-T-H motif) span residues 191-212 (DAVA…KQQT) and 239-262 (VTDI…RREF).

As to quaternary structure, binds DNA as a dimer.

It localises to the cytoplasm. Its function is as follows. Activates expression of the rhaBAD and rhaT operons. This Escherichia coli O6:H1 (strain CFT073 / ATCC 700928 / UPEC) protein is HTH-type transcriptional activator RhaS.